A 285-amino-acid polypeptide reads, in one-letter code: Catechol-2,3-dioxygenase (285 aa).

VOC domains lie at 9-126 and 169-285; these read HIGY…MYAD and IIGH…TFVI. Residues histidine 213 and glutamate 264 each coordinate Fe cation.

It belongs to the extradiol ring-cleavage dioxygenase family. The cofactor is Fe(2+).

The catalysed reaction is catechol + O2 = (2Z,4E)-2-hydroxy-6-oxohexa-2,4-dienoate + H(+). Functionally, involved in the meta cleavage of catechol to 2-hydroxymuconic semialdehyde. Essential for growth and viability in the presence of catechol and probably involved in the detoxification of catechol. The sequence is that of Catechol-2,3-dioxygenase (catE) from Bacillus subtilis (strain 168).